The sequence spans 464 residues: tRNA-2-methylthio-N(6)-dimethylallyladenosine synthase (464 aa).

The region spanning 19-135 (GSYWITTFGC…LENLLGKVDL (117 aa)) is the MTTase N-terminal domain. [4Fe-4S] cluster-binding residues include cysteine 28, cysteine 64, cysteine 98, cysteine 170, cysteine 174, and cysteine 177. Residues 156–393 (RESSICGWVN…NELVETTSKQ (238 aa)) enclose the Radical SAM core domain. Residues 396 to 464 (ERYLDSIESV…PFSLTGILCL (69 aa)) form the TRAM domain.

Belongs to the methylthiotransferase family. MiaB subfamily. As to quaternary structure, monomer. [4Fe-4S] cluster serves as cofactor.

The protein resides in the cytoplasm. The catalysed reaction is N(6)-dimethylallyladenosine(37) in tRNA + (sulfur carrier)-SH + AH2 + 2 S-adenosyl-L-methionine = 2-methylsulfanyl-N(6)-dimethylallyladenosine(37) in tRNA + (sulfur carrier)-H + 5'-deoxyadenosine + L-methionine + A + S-adenosyl-L-homocysteine + 2 H(+). Its function is as follows. Catalyzes the methylthiolation of N6-(dimethylallyl)adenosine (i(6)A), leading to the formation of 2-methylthio-N6-(dimethylallyl)adenosine (ms(2)i(6)A) at position 37 in tRNAs that read codons beginning with uridine. This Prochlorococcus marinus (strain MIT 9215) protein is tRNA-2-methylthio-N(6)-dimethylallyladenosine synthase.